Here is a 93-residue protein sequence, read N- to C-terminus: Signal recognition particle 19 kDa protein (93 aa).

Belongs to the SRP19 family. As to quaternary structure, part of the signal recognition particle protein translocation system, which is composed of SRP and FtsY. Archaeal SRP consists of a 7S RNA molecule of 300 nucleotides and two protein subunits: SRP54 and SRP19.

The protein localises to the cytoplasm. Its function is as follows. Involved in targeting and insertion of nascent membrane proteins into the cytoplasmic membrane. Binds directly to 7S RNA and mediates binding of the 54 kDa subunit of the SRP. The polypeptide is Signal recognition particle 19 kDa protein (Haloquadratum walsbyi (strain DSM 16790 / HBSQ001)).